The sequence spans 65 residues: Ferredoxin soy (65 aa).

In terms of domain architecture, 4Fe-4S ferredoxin-type spans 2–29 (GVQVDKERCVGAGMCALTAPDVFTQDDD). [3Fe-4S] cluster contacts are provided by C10, C16, and C55.

[3Fe-4S] cluster is required as a cofactor.

In terms of biological role, electron transport protein for the cytochrome P-450-SOY system. In Streptomyces griseus, this protein is Ferredoxin soy (soyB).